Reading from the N-terminus, the 275-residue chain is MAMDLGGYLTRIGLDGRPRPDLGTLHAIVAAHNRSIPFENLDPLLGIPVADLSAEALFAKLVDRRRGGYCYEHNGLLGYVLEELGFEVERLSGRVVWMRADDAPLPAQTHNVLSVAVPGADGRYLVDVGFGGQTLTSPIRLEAGPVQQTRHEPYRLTRHGDDHTLAAQVRGEWQPLYTFTTEPRPRIDLEVGSWYVSTHPGSHFVTGLTVAVVTDDARYNLRGRNLAVHRSGATEHIRFDSAAQVLDAIVNRFGIDLGDLAGRDVQARVAEVLDT.

The Acyl-thioester intermediate role is filled by Cys-70. Catalysis depends on residues His-110 and Asp-127.

This sequence belongs to the arylamine N-acetyltransferase family. As to quaternary structure, homodimer and homotetramer.

It carries out the reaction an arylamine + acetyl-CoA = an N-acetylarylamine + CoA. Functionally, catalyzes the transfer of the acetyl group from acetyl coenzyme A to the free amino group of arylamines and hydrazines. Substrates include isoniazid, anisidine, and 4-aminoveratrole, and to a much lesser extent, p-aminobenzoic acid. This is Arylamine N-acetyltransferase from Mycolicibacterium smegmatis (Mycobacterium smegmatis).